Consider the following 431-residue polypeptide: Glutamate-1-semialdehyde 2,1-aminomutase (431 aa).

An N6-(pyridoxal phosphate)lysine modification is found at K270.

This sequence belongs to the class-III pyridoxal-phosphate-dependent aminotransferase family. HemL subfamily. In terms of assembly, homodimer. It depends on pyridoxal 5'-phosphate as a cofactor.

Its subcellular location is the cytoplasm. The catalysed reaction is (S)-4-amino-5-oxopentanoate = 5-aminolevulinate. Its pathway is porphyrin-containing compound metabolism; protoporphyrin-IX biosynthesis; 5-aminolevulinate from L-glutamyl-tRNA(Glu): step 2/2. The chain is Glutamate-1-semialdehyde 2,1-aminomutase from Limosilactobacillus reuteri subsp. reuteri (strain JCM 1112) (Lactobacillus reuteri).